The chain runs to 427 residues: Protein TolB homolog (427 aa).

Positions 1-20 (MLRRIFVSTFLVFGIVSLYA) are cleaved as a signal peptide.

This sequence belongs to the TolB family.

The protein localises to the periplasm. The protein is Protein TolB homolog of Chlamydia caviae (strain ATCC VR-813 / DSM 19441 / 03DC25 / GPIC) (Chlamydophila caviae).